The sequence spans 476 residues: Probable flippase AglR (476 aa).

14 helical membrane passes run 7-29 (ASAL…TIYV), 34-56 (GVGA…IPAV), 83-103 (VLTG…SPFV), 112-132 (TQLV…LGGL), 146-166 (ALWG…GVGV), 168-188 (ALFY…VYSL), 222-242 (WLDT…IYEV), 246-266 (ISAL…PTIS), 287-307 (VAGV…GDIL), 310-330 (YGPS…LSVV), 354-373 (FRIG…SLIP), 377-396 (VIGA…ILAV), 409-429 (VSAI…LFTI), and 439-459 (IEVV…LLSL).

It belongs to the AglR/Agl15 family.

The protein resides in the cell membrane. The protein operates within cell surface structure biogenesis; S-layer biogenesis. Involved in the assembly of a N-linked pentasaccharide that decorates the S-layer glycoprotein and flagellins. Probably mediates or contributes to the translocation of the dolichol-phosphate-mannose across the membrane. This is Probable flippase AglR (aglR) from Haloferax volcanii (strain ATCC 29605 / DSM 3757 / JCM 8879 / NBRC 14742 / NCIMB 2012 / VKM B-1768 / DS2) (Halobacterium volcanii).